The primary structure comprises 208 residues: Orotidine 5'-phosphate decarboxylase (208 aa).

Substrate is bound by residues Asp-7, Lys-29, 57–66 (DLKLADIPNT), Ser-109, 162–172 (PGIGAQGGKAK), Gly-185, and Arg-186. Lys-59 acts as the Proton donor in catalysis.

The protein belongs to the OMP decarboxylase family. Type 1 subfamily. In terms of assembly, homodimer.

The enzyme catalyses orotidine 5'-phosphate + H(+) = UMP + CO2. Its pathway is pyrimidine metabolism; UMP biosynthesis via de novo pathway; UMP from orotate: step 2/2. Functionally, catalyzes the decarboxylation of orotidine 5'-monophosphate (OMP) to uridine 5'-monophosphate (UMP). This chain is Orotidine 5'-phosphate decarboxylase (pyrF), found in Pyrococcus horikoshii (strain ATCC 700860 / DSM 12428 / JCM 9974 / NBRC 100139 / OT-3).